Reading from the N-terminus, the 96-residue chain is Co-chaperonin GroES (96 aa).

This sequence belongs to the GroES chaperonin family. In terms of assembly, heptamer of 7 subunits arranged in a ring. Interacts with the chaperonin GroEL.

Its subcellular location is the cytoplasm. In terms of biological role, together with the chaperonin GroEL, plays an essential role in assisting protein folding. The GroEL-GroES system forms a nano-cage that allows encapsulation of the non-native substrate proteins and provides a physical environment optimized to promote and accelerate protein folding. GroES binds to the apical surface of the GroEL ring, thereby capping the opening of the GroEL channel. The sequence is that of Co-chaperonin GroES from Thiobacillus denitrificans (strain ATCC 25259 / T1).